The primary structure comprises 438 residues: Transposon Ty2-OR2 Gag polyprotein (438 aa).

Disordered stretches follow at residues 1 to 88, 365 to 397, and 419 to 438; these read MESQ…YQQH, NVSR…AKAH, and SSQY…TERI. Polar residues-rich tracts occupy residues 19–39 and 49–60; these read ASVT…SASN and KVNSQEETTPGT. The interval 295–397 is RNA-binding; that stretch reads ENNINVSDRL…SSKPRAAKAH (103 aa). Low complexity predominate over residues 369-381; that stretch reads TSPNTTNTKVTTR.

In terms of assembly, homotrimer.

It is found in the cytoplasm. Its function is as follows. Capsid protein (CA) is the structural component of the virus-like particle (VLP), forming the shell that encapsulates the retrotransposons dimeric RNA genome. The particles are assembled from trimer-clustered units and there are holes in the capsid shells that allow for the diffusion of macromolecules. CA also has nucleocapsid-like chaperone activity, promoting primer tRNA(i)-Met annealing to the multipartite primer-binding site (PBS), dimerization of Ty2 RNA and initiation of reverse transcription. This is Transposon Ty2-OR2 Gag polyprotein (TY2A-OR2) from Saccharomyces cerevisiae (strain ATCC 204508 / S288c) (Baker's yeast).